The primary structure comprises 638 residues: Transcription activator MSS11 (638 aa).

Residues 1–26 form a disordered region; the sequence is MSKPPPQHQSKNANNSLSSPVSDKQS. Polar residues predominate over residues 8–26; the sequence is HQSKNANNSLSSPVSDKQS. In terms of domain architecture, LisH spans 29–61; it reads SRQLLLAHLYNYFKTNGLEETAQALLIECNNTI. Disordered stretches follow at residues 187-216, 270-331, 362-515, and 572-638; these read LSTTTNQMGPPGSNSNNLQSNMSPNNEQLQ, QQRQ…NAVS, NNQQ…NNNK, and MPPN…PGYE. Over residues 283-295 the composition is skewed to polar residues; it reads STSSQKSPVINNG. Low complexity-rich tracts occupy residues 296 to 328, 369 to 387, and 394 to 408; these read QPQQQLQQDQRPASAPQNQPTPGNNNNNNNNTN, SQQQQQQQQSQSQSQQSSP, and QPKNSTTTSTNTTTS. Residues 412 to 423 show a composition bias toward basic residues; sequence KSSRKQQPKNSR. Positions 425–465 are enriched in low complexity; that stretch reads QSVQQQQQQQPQQQPQQSQQMSTSSQSFTAANNSNNVNNTF. Residues 466–481 are compositionally biased toward polar residues; sequence DISPQIQDQGMLSTKE. Composition is skewed to low complexity over residues 495–515 and 572–585; these read SQPQSQSQSLPSNNNNNNNNK and MPPNQNQNQFPSQS. Gly residues predominate over residues 586–595; sequence GDGGGGGGGS.

Belongs to the MSS11 family. Interacts with FLO8.

It localises to the cytoplasm. It is found in the nucleus. Functionally, transcription factor that regulates pseudohyphal differentiation, invasive growth, floculation, adhesion and starch metabolism in response to nutrient availability. This is Transcription activator MSS11 (MSS11) from Candida albicans (strain SC5314 / ATCC MYA-2876) (Yeast).